We begin with the raw amino-acid sequence, 425 residues long: Serine--tRNA ligase (425 aa).

An L-serine-binding site is contributed by Thr-230–Glu-232. Residue Arg-261–Glu-263 coordinates ATP. Glu-284 serves as a coordination point for L-serine. Glu-348–Ser-351 provides a ligand contact to ATP. L-serine is bound at residue Ser-385.

It belongs to the class-II aminoacyl-tRNA synthetase family. Type-1 seryl-tRNA synthetase subfamily. Homodimer. The tRNA molecule binds across the dimer.

It localises to the cytoplasm. It catalyses the reaction tRNA(Ser) + L-serine + ATP = L-seryl-tRNA(Ser) + AMP + diphosphate + H(+). The enzyme catalyses tRNA(Sec) + L-serine + ATP = L-seryl-tRNA(Sec) + AMP + diphosphate + H(+). It participates in aminoacyl-tRNA biosynthesis; selenocysteinyl-tRNA(Sec) biosynthesis; L-seryl-tRNA(Sec) from L-serine and tRNA(Sec): step 1/1. Its function is as follows. Catalyzes the attachment of serine to tRNA(Ser). Is also able to aminoacylate tRNA(Sec) with serine, to form the misacylated tRNA L-seryl-tRNA(Sec), which will be further converted into selenocysteinyl-tRNA(Sec). The sequence is that of Serine--tRNA ligase from Wolbachia sp. subsp. Brugia malayi (strain TRS).